A 565-amino-acid polypeptide reads, in one-letter code: Deformed epidermal autoregulatory factor 1 homolog (565 aa).

Disordered regions lie at residues 34–62 (GGEAEEPVLSRDEDSEEDADSEAERETPR) and 162–190 (GLKGPAAPLTPGPQSPPTPLAPGQEKGGT). Residues 169 to 181 (PLTPGPQSPPTPL) are compositionally biased toward pro residues. Threonine 171 bears the Phosphothreonine mark. Phosphoserine is present on serine 176. Position 179 is a phosphothreonine (threonine 179). Residues 193–273 (NWDPSVYDSE…QCLIQDGILN (81 aa)) enclose the SAND domain. Residues 301–316 (KRRKKENELPTTPVKK) carry the Nuclear localization signal motif. The interaction with LMO4 stretch occupies residues 403-478 (IAPFPEAALP…QLKTLFEQAK (76 aa)). Residue threonine 432 is modified to Phosphothreonine. The residue at position 448 (serine 448) is a Phosphoserine. Zn(2+) is bound by residues cysteine 504, cysteine 507, cysteine 515, cysteine 518, cysteine 524, cysteine 528, histidine 536, and cysteine 540. An MYND-type zinc finger spans residues 504–540 (CVNCGREAMNECTGCHKVNYCSTFCQRKDWKDHQHIC).

In terms of assembly, homodimer. Interacts with LMO4; LMO4 blocks export from nucleus. Interacts with LMO2 and CLIM2. May interact with the corepressors NCOR1 and NCRO2. Identified in a complex with XRCC5 and XRCC6. Interacts (via the SAND domain) with the DNA-PK complex subunit XRCC6; the interaction is direct and may be inhibited by DNA-binding. May be phosphorylated by DNA-PK complex in a DNA independent manner (in vitro).

The protein localises to the nucleus. In terms of biological role, transcription factor that binds to sequence with multiple copies of 5'-TTC[CG]G-3' present in its own promoter and that of the HNRPA2B1 gene. Down-regulates transcription of these genes. Binds to the retinoic acid response element (RARE) 5'-AGGGTTCACCGAAAGTTCA-3'. Activates the proenkephalin gene independently of promoter binding, probably through protein-protein interaction. Regulates epithelial cell proliferation and side-branching in the mammary gland. Required for neural tube closure and skeletal patterning. Controls the expression of peripheral tissue antigens in pancreatic lymph nodes. Transcriptional activator of EIF4G3. May also involved in behavior. This is Deformed epidermal autoregulatory factor 1 homolog (DEAF1) from Pan troglodytes (Chimpanzee).